The sequence spans 209 residues: Eukaryotic translation initiation factor 4E (209 aa).

MRNA-binding positions include 51 to 52, 97 to 98, and 153 to 158; these read WH, WE, and RKQAYR.

The protein belongs to the eukaryotic initiation factor 4E family. In terms of assembly, eIF4F is a multi-subunit complex, the composition of which varies with external and internal environmental conditions. It is composed of at least eIF4A, eIF4E and eIF4G. eIF4E is also known to interact with other partners.

Its function is as follows. Recognizes and binds the 7-methylguanosine-containing mRNA cap during an early step in the initiation of protein synthesis and facilitates ribosome binding by inducing the unwinding of the mRNAs secondary structures. This is Eukaryotic translation initiation factor 4E (TIF45) from Candida albicans (strain SC5314 / ATCC MYA-2876) (Yeast).